The following is a 338-amino-acid chain: Glycerol-3-phosphate dehydrogenase [NAD(P)+] (338 aa).

NADPH is bound by residues S14, F15, R35, and K109. Sn-glycerol 3-phosphate-binding residues include K109 and G137. A141 contributes to the NADPH binding site. Sn-glycerol 3-phosphate-binding residues include K192, D247, S257, R258, and N259. K192 (proton acceptor) is an active-site residue. R258 is an NADPH binding site. Residues L282 and E284 each contribute to the NADPH site.

It belongs to the NAD-dependent glycerol-3-phosphate dehydrogenase family.

It localises to the cytoplasm. The catalysed reaction is sn-glycerol 3-phosphate + NAD(+) = dihydroxyacetone phosphate + NADH + H(+). The enzyme catalyses sn-glycerol 3-phosphate + NADP(+) = dihydroxyacetone phosphate + NADPH + H(+). It functions in the pathway membrane lipid metabolism; glycerophospholipid metabolism. Catalyzes the reduction of the glycolytic intermediate dihydroxyacetone phosphate (DHAP) to sn-glycerol 3-phosphate (G3P), the key precursor for phospholipid synthesis. The chain is Glycerol-3-phosphate dehydrogenase [NAD(P)+] from Rickettsia rickettsii (strain Iowa).